Consider the following 174-residue polypeptide: Neuromedin-U (174 aa).

The first 37 residues, 1 to 37, serve as a signal peptide directing secretion; that stretch reads MSRAAGHRPGLSAGQLAAATASPLLSLLLLLACCADA. Residues 38–105 constitute a propeptide that is removed on maturation; that stretch reads CKGVPISPQR…EQSEKDNTKR (68 aa). M141 carries the post-translational modification Methionine sulfoxide; partial. An Asparagine amide modification is found at N166. Residues 170-174 constitute a propeptide that is removed on maturation; it reads STSFI.

The protein belongs to the NmU family.

The protein resides in the secreted. Ligand for receptors NMUR1 and NMUR2. Stimulates muscle contractions of specific regions of the gastrointestinal tract. In terms of biological role, does not function as a ligand for either NMUR1 or NMUR2. Indirectly induces prolactin release although its potency is much lower than that of neuromedin precursor-related peptide 36. Functionally, does not function as a ligand for either NMUR1 or NMUR2. Indirectly induces prolactin release from lactotroph cells in the pituitary gland, probably via the hypothalamic dopaminergic system. Its function is as follows. Stimulates muscle contractions of specific regions of the gastrointestinal tract. This Mus musculus (Mouse) protein is Neuromedin-U (Nmu).